The primary structure comprises 632 residues: Phosphomethylpyrimidine synthase (632 aa).

Over residues 1-23 (MNIRSNPQQTVPAVTTGPLSSSR) the composition is skewed to polar residues. The tract at residues 1–26 (MNIRSNPQQTVPAVTTGPLSSSRKIF) is disordered. Residues asparagine 221, methionine 250, tyrosine 279, histidine 315, 335-337 (SRG), 376-379 (DGLR), and glutamate 415 each bind substrate. Histidine 419 is a Zn(2+) binding site. Residue tyrosine 442 coordinates substrate. Histidine 483 contributes to the Zn(2+) binding site. [4Fe-4S] cluster is bound by residues cysteine 563, cysteine 566, and cysteine 571.

The protein belongs to the ThiC family. In terms of assembly, homodimer. Requires [4Fe-4S] cluster as cofactor.

It catalyses the reaction 5-amino-1-(5-phospho-beta-D-ribosyl)imidazole + S-adenosyl-L-methionine = 4-amino-2-methyl-5-(phosphooxymethyl)pyrimidine + CO + 5'-deoxyadenosine + formate + L-methionine + 3 H(+). It participates in cofactor biosynthesis; thiamine diphosphate biosynthesis. In terms of biological role, catalyzes the synthesis of the hydroxymethylpyrimidine phosphate (HMP-P) moiety of thiamine from aminoimidazole ribotide (AIR) in a radical S-adenosyl-L-methionine (SAM)-dependent reaction. This Bradyrhizobium diazoefficiens (strain JCM 10833 / BCRC 13528 / IAM 13628 / NBRC 14792 / USDA 110) protein is Phosphomethylpyrimidine synthase.